Consider the following 501-residue polypeptide: Aminoaldehyde dehydrogenase ALDH10A8, chloroplastic (501 aa).

Positions 99 and 189 each coordinate Na(+). Residues 238 to 243 (GSFATG) and 238 to 245 (GSFATGSK) contribute to the NAD(+) site. The active-site Proton acceptor is the Glu260. NAD(+) is bound by residues Cys294 and Glu393. The active-site Nucleophile is the Cys294.

The protein belongs to the aldehyde dehydrogenase family. In terms of assembly, homodimer. Widely expressed.

It is found in the cytoplasm. Its subcellular location is the plastid. It localises to the chloroplast. The enzyme catalyses 4-aminobutanal + NAD(+) + H2O = 4-aminobutanoate + NADH + 2 H(+). It carries out the reaction 3-aminopropanal + NAD(+) + H2O = beta-alanine + NADH + 2 H(+). The catalysed reaction is 4-(trimethylamino)butanal + NAD(+) + H2O = 4-(trimethylamino)butanoate + NADH + 2 H(+). It catalyses the reaction 4-guanidinobutanal + NAD(+) + H2O = 4-guanidinobutanoate + NADH + 2 H(+). The enzyme catalyses betaine aldehyde + NAD(+) + H2O = glycine betaine + NADH + 2 H(+). Its pathway is amine and polyamine biosynthesis; betaine biosynthesis via choline pathway; betaine from betaine aldehyde: step 1/1. In terms of biological role, dehydrogenase that catalyzes the oxidation of several aminoaldehydes. Metabolizes and detoxifies aldehyde products of polyamine degradation to non-toxic amino acids. Catalyzes the oxidation of 4-aminobutanal and 3-aminopropanal to 4-aminobutanoate and beta-alanine, respectively. Production of 4-aminobutinoate by ALDH10A8 may confer tolerance to salt stress. Catalyzes the oxidation of 4-(trimethylamino)butanal and 4-guanidinobutanal to 4-trimethylammoniobutanoate and 4-guanidinobutanoate, respectively. Involved in glycine betaine biosynthesis. Catalyzes with low efficiency the oxidation of betaine aldehyde to glycine betaine. The sequence is that of Aminoaldehyde dehydrogenase ALDH10A8, chloroplastic from Arabidopsis thaliana (Mouse-ear cress).